Reading from the N-terminus, the 239-residue chain is Cysteine-rich venom protein (239 aa).

Residues 1-19 (MIAFLVLPILAAVLQQSSG) form the signal peptide. The SCP domain occupies 39 to 166 (DLHNSLRRSV…EYKYFYVCQY (128 aa)). Disulfide bonds link C75–C153, C92–C167, C148–C164, C186–C193, C189–C198, C202–C234, C211–C228, and C219–C232. The 33-residue stretch at 202 to 234 (CTHEDKFTNCKDLVKQGCNNNYLKTNCPASCSC) folds into the ShKT domain.

Belongs to the CRISP family. Expressed by the venom gland.

The protein localises to the secreted. In terms of biological role, blocks contraction of smooth muscle elicited by high potassium-induced depolarization, but does not block caffeine-stimulated contraction. May target voltage-gated calcium channels in smooth muscle. In Vipera berus (Common European adder), this protein is Cysteine-rich venom protein.